A 372-amino-acid polypeptide reads, in one-letter code: Protein RecA (372 aa).

77–84 (GPESSGKT) lines the ATP pocket.

Belongs to the RecA family.

It is found in the cytoplasm. In terms of biological role, can catalyze the hydrolysis of ATP in the presence of single-stranded DNA, the ATP-dependent uptake of single-stranded DNA by duplex DNA, and the ATP-dependent hybridization of homologous single-stranded DNAs. It interacts with LexA causing its activation and leading to its autocatalytic cleavage. The protein is Protein RecA of Corynebacterium diphtheriae (strain ATCC 700971 / NCTC 13129 / Biotype gravis).